We begin with the raw amino-acid sequence, 372 residues long: MRSKVTGAQRWVVKIGSALLTADGKGLDRNAMGVWVEQMVALHEAGVELVLVSSGAVAAGMSRLGWTARPSAMHELQAAAAIGQMGLVQAWESSFAEHGRHTAQILLTHDDLSDRKRYLNARSTLRTLVELGVVPVINENDTVVTDEIRFGDNDTLAALVANLVEADLLVILTDRDGMFDADPRNNPDAQLIYEARADDPALDAVAGGTGGALGRGGMQTKLRAARLAARSGAHTVIVGGRIERVLARLKGGERLGTLLSPEREMLAARKQWLAGHLQTRGTLVLDDGAVSALASDHKSLLPVGVKLVQGSFRRGEMVVCVAPDGREIARGLSNYSAIEAQKIIGHSSEAIVRELGYMAEPELIHRDNLILV.

Residue Lys14 participates in ATP binding. 3 residues coordinate substrate: Ser54, Asp141, and Asn153. Residue 173 to 174 (TD) coordinates ATP. Residues 280-358 (RGTLVLDDGA…EAIVRELGYM (79 aa)) form the PUA domain.

This sequence belongs to the glutamate 5-kinase family.

The protein localises to the cytoplasm. It catalyses the reaction L-glutamate + ATP = L-glutamyl 5-phosphate + ADP. It participates in amino-acid biosynthesis; L-proline biosynthesis; L-glutamate 5-semialdehyde from L-glutamate: step 1/2. Catalyzes the transfer of a phosphate group to glutamate to form L-glutamate 5-phosphate. The protein is Glutamate 5-kinase of Pseudomonas syringae pv. tomato (strain ATCC BAA-871 / DC3000).